The primary structure comprises 190 residues: Prostaglandin-H2 D-isomerase (190 aa).

Positions 1–22 (MATHHTLWMGLVLLGLLGGLQA) are cleaved as a signal peptide. An N-linked (GlcNAc...) asparagine glycan is attached at asparagine 51. The Nucleophile role is filled by cysteine 65. Residue asparagine 78 is glycosylated (N-linked (GlcNAc...) asparagine). Cysteine 89 and cysteine 186 are oxidised to a cystine.

The protein belongs to the calycin superfamily. Lipocalin family. As to quaternary structure, monomer.

It is found in the rough endoplasmic reticulum. The protein resides in the nucleus membrane. The protein localises to the golgi apparatus. Its subcellular location is the cytoplasm. It localises to the perinuclear region. It is found in the secreted. It catalyses the reaction prostaglandin H2 = prostaglandin D2. Catalyzes the conversion of PGH2 to PGD2, a prostaglandin involved in smooth muscle contraction/relaxation and a potent inhibitor of platelet aggregation. Involved in a variety of CNS functions, such as sedation, NREM sleep and PGE2-induced allodynia, and may have an anti-apoptotic role in oligodendrocytes. Binds small non-substrate lipophilic molecules, including biliverdin, bilirubin, retinal, retinoic acid and thyroid hormone, and may act as a scavenger for harmful hydrophobic molecules and as a secretory retinoid and thyroid hormone transporter. Possibly involved in development and maintenance of the blood-brain, blood-retina, blood-aqueous humor and blood-testis barrier. It is likely to play important roles in both maturation and maintenance of the central nervous system and male reproductive system. Involved in PLA2G3-dependent maturation of mast cells. PLA2G3 is secreted by immature mast cells and acts on nearby fibroblasts upstream to PTDGS to synthesize PGD2, which in turn promotes mast cell maturation and degranulation via PTGDR. This chain is Prostaglandin-H2 D-isomerase (PTGDS), found in Macaca fuscata fuscata (Japanese macaque).